A 333-amino-acid chain; its full sequence is DNA-directed RNA polymerase subunit alpha (333 aa).

Positions 1 to 234 (MQSSVNEFLT…QQLAAFVDLK (234 aa)) are alpha N-terminal domain (alpha-NTD). Residues 248–333 (IDPILLRPVD…SLKKDDKATA (86 aa)) are alpha C-terminal domain (alpha-CTD).

This sequence belongs to the RNA polymerase alpha chain family. Homodimer. The RNAP catalytic core consists of 2 alpha, 1 beta, 1 beta' and 1 omega subunit. When a sigma factor is associated with the core the holoenzyme is formed, which can initiate transcription.

It catalyses the reaction RNA(n) + a ribonucleoside 5'-triphosphate = RNA(n+1) + diphosphate. Its function is as follows. DNA-dependent RNA polymerase catalyzes the transcription of DNA into RNA using the four ribonucleoside triphosphates as substrates. The polypeptide is DNA-directed RNA polymerase subunit alpha (Pseudomonas aeruginosa (strain UCBPP-PA14)).